A 362-amino-acid chain; its full sequence is Transcription factor Sox-7 (362 aa).

The tract at residues 21–41 (EDLSDGLSPHRSPREKGSETR) is disordered. Residues 32–41 (SPREKGSETR) show a composition bias toward basic and acidic residues. The HMG box DNA-binding region spans 42–110 (IRRPMNAFMV…QHMQDYPNYK (69 aa)). Residues 245-362 (QTGSSMIPPV…ATYYNSYSVS (118 aa)) enclose the Sox C-terminal domain.

Expressed in the embryonic pronephric sinus as well as posterior cardinal veins.

The protein localises to the nucleus. Its function is as follows. Transcription factor. Binds to the DNA sequence 5'-AACAAT-3'. Acts downstream of vegt and upstream of nodal signaling to promote endodermal and mesodermal differentiation by promoting vegt-induced expression of both endodermal genes (including endodermin) and mesodermal genes (including snai1/snail and snai2/slug). Induces expression of multiple nodal genes (including nodal, nodal2, nodal4, nodal5 and nodal6) and binds directly to sites within the promoter of the nodal5 gene. The endodermal and mesodermal specification pathways then interact to initiate cardiogenesis. Acts partially redundantly with sox18 during cardiogenesis. Also acts as an antagonist of beta-catenin signaling. Regulates (possibly indirectly) development of the pronephros, the functional larval kidney. In Xenopus tropicalis (Western clawed frog), this protein is Transcription factor Sox-7.